Reading from the N-terminus, the 260-residue chain is Carbonic anhydrase 3 (260 aa).

Ala2 is modified (N-acetylalanine). Residues 3–259 (KEWGYASHNG…INNRVVRASF (257 aa)) enclose the Alpha-carbonic anhydrase domain. Ser29, Ser43, Ser48, Ser50, and Ser55 each carry phosphoserine. The tract at residues 64–67 (KTCR) is involved in proton transfer. At Thr73 the chain carries Phosphothreonine. Residues His94, His96, and His119 each contribute to the Zn(2+) site. The residue at position 127 (Tyr127) is a Phosphotyrosine. Thr129 and Thr176 each carry phosphothreonine. Residues Cys182 and Cys187 each carry the S-glutathionyl cysteine modification. 198-199 (TT) provides a ligand contact to substrate. Residue Thr216 is modified to Phosphothreonine. A Phosphoserine modification is found at Ser219.

Belongs to the alpha-carbonic anhydrase family. Zn(2+) is required as a cofactor. Post-translationally, S-thiolated both by thiol-disulfide exchange with glutathione disulfide and by oxyradical-initiated S-thiolation with reduced glutathione. In terms of processing, S-glutathionylated in hepatocytes under oxidative stress. In terms of tissue distribution, muscle specific.

Its subcellular location is the cytoplasm. The enzyme catalyses hydrogencarbonate + H(+) = CO2 + H2O. With respect to regulation, activated by proton donors such as imidazole and the dipeptide histidylhistidine. Inhibited by coumarins and sulfonamide derivatives such as acetazolamide. In terms of biological role, reversible hydration of carbon dioxide. In Homo sapiens (Human), this protein is Carbonic anhydrase 3.